The sequence spans 253 residues: Tetraspanin-11 (253 aa).

Helical transmembrane passes span leucine 19–isoleucine 39, isoleucine 63–leucine 83, and tyrosine 93–valine 113. The N-linked (GlcNAc...) asparagine glycan is linked to asparagine 127. A helical transmembrane segment spans residues leucine 220 to leucine 240.

It belongs to the tetraspanin (TM4SF) family.

It is found in the membrane. The chain is Tetraspanin-11 (TSPAN11) from Homo sapiens (Human).